The sequence spans 611 residues: Protein spaetzle 3 (611 aa).

The signal sequence occupies residues 1–14; the sequence is MALTNFSLPFGALG. Residue asparagine 5 is glycosylated (N-linked (GlcNAc...) asparagine). Residues 57–322 are disordered; it reads EYFKNNPYAP…NDKSNNNQMP (266 aa). Composition is skewed to low complexity over residues 104-120, 127-153, and 169-185; these read QQVQ…QHQQ, SVSF…LTQT, and PGQQ…QQKQ. Residues 191 to 210 show a composition bias toward polar residues; the sequence is GSASATFTKNSGSFSITSFG. Positions 218 to 239 are enriched in pro residues; it reads PPQPQQPPPSQQQQPPPAPPPQ. The span at 288-306 shows a compositional bias: acidic residues; the sequence is YDVEEGEEDEEEDGEEEGQ. 2 N-linked (GlcNAc...) asparagine glycosylation sites follow: asparagine 335 and asparagine 351. The tract at residues 477 to 518 is disordered; sequence KKRQAAAGGSRNRGGSAGGSGNGNTNANRQPGNKNGSSGTGR. Positions 487 to 498 are enriched in gly residues; that stretch reads RNRGGSAGGSGN. Asparagine 511 carries N-linked (GlcNAc...) asparagine glycosylation. The Spaetzle domain maps to 521–609; it reads ACESKIEIVT…LFPSCCVCRC (89 aa). Cystine bridges form between cysteine 522–cysteine 573, cysteine 559–cysteine 605, and cysteine 567–cysteine 607.

Homodimer; disulfide-linked.

Its function is as follows. Neurotrophin which may function as a ligand to the Toll-related receptor Tollo. Involved in a Tollo and JNK signaling pathway that positively regulates neuromuscular junction (NMJ) growth in presynaptic motorneurons. May function by activating Tollo to promote the phosphorylation of JNK. This Drosophila melanogaster (Fruit fly) protein is Protein spaetzle 3.